Consider the following 727-residue polypeptide: Protein EXECUTER 1, chloroplastic (727 aa).

Disordered regions lie at residues 1–51 (MAAA…SRLF), 65–102 (LAGA…AGSG), 340–381 (ISSS…LPSD), and 413–455 (DEDD…SGDE). A chloroplast-targeting transit peptide spans 1 to 83 (MAAAVSTAPR…PRRRVSSVVR (83 aa)). Composition is skewed to low complexity over residues 19 to 33 (SSSC…ASMS) and 42 to 51 (PSSGSGSRLF). Acidic residues predominate over residues 413-441 (DEDDENDNPEDEIESSEDIGDGDNVEEAE).

It localises to the plastid. The protein resides in the chloroplast. Together with EX2, enables higher plants to perceive singlet oxygen as a stress signal in plastid that activates a genetically determined nuclear stress response program which triggers a programmed cell death (PCD). This transfer of singlet oxygen-induced stress-related signals from the plastid to the nucleus that triggers genetically controlled PCD pathway is unique to photosynthetic eukaryotes and operates under mild stress conditions, impeding photosystem II (PSII) without causing photooxidative damage of the plant. The protein is Protein EXECUTER 1, chloroplastic of Oryza sativa subsp. japonica (Rice).